The chain runs to 276 residues: Proteasome subunit beta type-8 (276 aa).

A propeptide spans 1 to 72 (removed in mature form); sequence MALLEVCGAP…KNIRKEMVHG (72 aa). Residue Thr73 is the Nucleophile of the active site.

The protein belongs to the peptidase T1B family. The 26S proteasome consists of a 20S proteasome core and two 19S regulatory subunits. The 20S proteasome core is composed of 28 subunits that are arranged in four stacked rings, resulting in a barrel-shaped structure. The two end rings are each formed by seven alpha subunits, and the two central rings are each formed by seven beta subunits. The catalytic chamber with the active sites is on the inside of the barrel. Component of the immunoproteasome, where it displaces the equivalent housekeeping subunit PSMB5. Component of the spermatoproteasome, a form of the proteasome specifically found in testis. Directly interacts with POMP. Autocleaved. The resulting N-terminal Thr residue of the mature subunit is responsible for the nucleophile proteolytic activity.

It localises to the cytoplasm. It is found in the nucleus. The catalysed reaction is Cleavage of peptide bonds with very broad specificity.. Its function is as follows. The proteasome is a multicatalytic proteinase complex which is characterized by its ability to cleave peptides with Arg, Phe, Tyr, Leu, and Glu adjacent to the leaving group at neutral or slightly basic pH. The proteasome has an ATP-dependent proteolytic activity. This subunit is involved in antigen processing to generate class I binding peptides. May participate in the generation of spliced peptides resulting from the ligation of two separate proteasomal cleavage products that are not contiguous in the parental protein. Required for adipocyte differentiation. This is Proteasome subunit beta type-8 (PSMB8) from Canis lupus familiaris (Dog).